Consider the following 64-residue polypeptide: Large ribosomal subunit protein bL35 (64 aa).

This sequence belongs to the bacterial ribosomal protein bL35 family.

This Micrococcus luteus (strain ATCC 4698 / DSM 20030 / JCM 1464 / CCM 169 / CCUG 5858 / IAM 1056 / NBRC 3333 / NCIMB 9278 / NCTC 2665 / VKM Ac-2230) (Micrococcus lysodeikticus) protein is Large ribosomal subunit protein bL35.